Here is a 368-residue protein sequence, read N- to C-terminus: MSKPRTRVAVIFGGRSNEHSVSCVSAGSVLRNLDPERYEVVPIGITTEGSWVLGSTDPETLSIRGRALPSVDADGSALALTADPTRSGDLVALDDGEAGKILASVDVVFPVLHGAYGEDGTIQGLLELAGVPYVGPGVLASAAGMDKEFTKKLLAAEGLPIGFQVVLRPGTATLTDEQKSRLHLPVFVKPARGGSSIGITRVAEWAALDDAIAHARLHDPKVIVESGIIGREVECGVLEFPDGDVRASVIAEIRMPEGAGDDEAFYDFDSKYLDDVCEFDVPAKLDESVSDEIRELAVRAFSALDCQGLARVDFFVTEDGPVINEINTMPGFTSISMYPRMWGAVGVDYGTLVSTLVDTALARGIGLR.

Residues 151–358 (KKLLAAEGLP…YGTLVSTLVD (208 aa)) form the ATP-grasp domain. Position 179–234 (179–234 (KSRLHLPVFVKPARGGSSIGITRVAEWAALDDAIAHARLHDPKVIVESGIIGREVE)) interacts with ATP. Mg(2+)-binding residues include D313, E325, and N327.

Belongs to the D-alanine--D-alanine ligase family. It depends on Mg(2+) as a cofactor. Mn(2+) is required as a cofactor.

It is found in the cytoplasm. The enzyme catalyses 2 D-alanine + ATP = D-alanyl-D-alanine + ADP + phosphate + H(+). Its pathway is cell wall biogenesis; peptidoglycan biosynthesis. Functionally, cell wall formation. This chain is D-alanine--D-alanine ligase, found in Rhodococcus jostii (strain RHA1).